Here is a 661-residue protein sequence, read N- to C-terminus: UvrABC system protein B (661 aa).

Residues 25–414 form the Helicase ATP-binding domain; that stretch reads AGLSSKKRSQ…GTVVELIIRP (390 aa). Position 38–45 (38–45) interacts with ATP; the sequence is GITGSGKT. Residues 91–114 carry the Beta-hairpin motif; that stretch reads YYDYYQPEAYIARTDTFIEKDSSI. In terms of domain architecture, Helicase C-terminal spans 430 to 592; the sequence is QVEDLISEIQ…IIPKTINRAI (163 aa). Residues 621–656 enclose the UVR domain; sequence KTHIDKLKKEMLKAASNLEFEQAVKLRDQLKTLEEA.

Belongs to the UvrB family. As to quaternary structure, forms a heterotetramer with UvrA during the search for lesions. Interacts with UvrC in an incision complex.

Its subcellular location is the cytoplasm. The UvrABC repair system catalyzes the recognition and processing of DNA lesions. A damage recognition complex composed of 2 UvrA and 2 UvrB subunits scans DNA for abnormalities. Upon binding of the UvrA(2)B(2) complex to a putative damaged site, the DNA wraps around one UvrB monomer. DNA wrap is dependent on ATP binding by UvrB and probably causes local melting of the DNA helix, facilitating insertion of UvrB beta-hairpin between the DNA strands. Then UvrB probes one DNA strand for the presence of a lesion. If a lesion is found the UvrA subunits dissociate and the UvrB-DNA preincision complex is formed. This complex is subsequently bound by UvrC and the second UvrB is released. If no lesion is found, the DNA wraps around the other UvrB subunit that will check the other stand for damage. This is UvrABC system protein B from Rickettsia conorii (strain ATCC VR-613 / Malish 7).